The following is a 155-amino-acid chain: Basic phospholipase A2 PC1 (155 aa).

An N-terminal signal peptide occupies residues 1–21 (MYPAHLLVLLAVCVSLLGASA). The propeptide occupies 22–27 (ISNRPR). Cystine bridges form between C38/C98, C54/C144, C56/C72, C71/C125, C78/C118, C87/C111, and C105/C116. 3 residues coordinate Ca(2+): Y55, G57, and G59. Residue H75 is part of the active site. D76 provides a ligand contact to Ca(2+). D119 is an active-site residue.

It belongs to the phospholipase A2 family. Group I subfamily. D49 sub-subfamily. Requires Ca(2+) as cofactor. Expressed by the venom gland.

The protein resides in the secreted. It catalyses the reaction a 1,2-diacyl-sn-glycero-3-phosphocholine + H2O = a 1-acyl-sn-glycero-3-phosphocholine + a fatty acid + H(+). Snake venom phospholipase A2 (PLA2) that inhibits neuromuscular transmission by blocking acetylcholine release from the nerve termini. PLA2 catalyzes the calcium-dependent hydrolysis of the 2-acyl groups in 3-sn-phosphoglycerides. In Laticauda colubrina (Yellow-lipped sea krait), this protein is Basic phospholipase A2 PC1.